Reading from the N-terminus, the 442-residue chain is 3-dehydroquinate synthase, chloroplastic (442 aa).

The N-terminal 61 residues, 1 to 61, are a transit peptide targeting the chloroplast; that stretch reads MASSFCPKQA…TTRLKVLATS (61 aa). NAD(+) contacts are provided by residues Asn-119, 150–152, Lys-155, 183–188, 208–209, Lys-221, Lys-230, and 248–251; these read DGE, GGVIGD, TT, and TLNT. An a divalent metal cation-binding site is contributed by Glu-263. An NAD(+)-binding site is contributed by Lys-305. Residues His-326 and His-343 each contribute to the a divalent metal cation site.

The protein belongs to the sugar phosphate cyclases superfamily. Dehydroquinate synthase family. As to quaternary structure, homodimer. A divalent metal cation is required as a cofactor. NAD(+) serves as cofactor. In terms of tissue distribution, highly expressed in roots. Lower expression in stems, flowers and cotyledons. Barely detected in leaves.

It is found in the plastid. The protein localises to the chloroplast. It carries out the reaction 7-phospho-2-dehydro-3-deoxy-D-arabino-heptonate = 3-dehydroquinate + phosphate. The protein operates within metabolic intermediate biosynthesis; chorismate biosynthesis; chorismate from D-erythrose 4-phosphate and phosphoenolpyruvate: step 2/7. Functionally, catalyzes the second step in the shikimate pathway. The polypeptide is 3-dehydroquinate synthase, chloroplastic (DHQS) (Solanum lycopersicum (Tomato)).